Reading from the N-terminus, the 198-residue chain is ATP synthase subunit b (198 aa).

A helical transmembrane segment spans residues 49–67 (IWKWANFLILAGGLGYLVG).

The protein belongs to the ATPase B chain family. As to quaternary structure, F-type ATPases have 2 components, F(1) - the catalytic core - and F(0) - the membrane proton channel. F(1) has five subunits: alpha(3), beta(3), gamma(1), delta(1), epsilon(1). F(0) has three main subunits: a(1), b(2) and c(10-14). The alpha and beta chains form an alternating ring which encloses part of the gamma chain. F(1) is attached to F(0) by a central stalk formed by the gamma and epsilon chains, while a peripheral stalk is formed by the delta and b chains.

It is found in the cell inner membrane. Functionally, f(1)F(0) ATP synthase produces ATP from ADP in the presence of a proton or sodium gradient. F-type ATPases consist of two structural domains, F(1) containing the extramembraneous catalytic core and F(0) containing the membrane proton channel, linked together by a central stalk and a peripheral stalk. During catalysis, ATP synthesis in the catalytic domain of F(1) is coupled via a rotary mechanism of the central stalk subunits to proton translocation. In terms of biological role, component of the F(0) channel, it forms part of the peripheral stalk, linking F(1) to F(0). This is ATP synthase subunit b from Solibacter usitatus (strain Ellin6076).